The sequence spans 607 residues: Probable Ufm1-specific protease 2 (607 aa).

Active-site residues include cysteine 440, aspartate 564, and histidine 566.

This sequence belongs to the peptidase C78 family.

In terms of biological role, thiol protease which recognizes and hydrolyzes the peptide bond at the C-terminal Gly of UFM1, a ubiquitin-like modifier protein bound to a number of target proteins. Does not hydrolyze SUMO1 or ISG15 ubiquitin-like proteins. The chain is Probable Ufm1-specific protease 2 from Drosophila melanogaster (Fruit fly).